Reading from the N-terminus, the 1501-residue chain is Ribulose bisphosphate carboxylase (1501 aa).

N111 provides a ligand contact to substrate. The active-site Proton acceptor is K166. K168 is a substrate binding site. The Mg(2+) site is built by K191, D193, and E194. The residue at position 191 (K191) is an N6-carboxylysine. H287 (proton acceptor) is an active-site residue. Substrate is bound by residues R288, H321, and S368. The propeptide at 486-508 is linker; the sequence is SAAAFVGASVAPAKKENVVARQA. N619 is a binding site for substrate. K674 acts as the Proton acceptor in catalysis. K676 provides a ligand contact to substrate. 3 residues coordinate Mg(2+): K699, D701, and E702. K699 carries the post-translational modification N6-carboxylysine. The Proton acceptor role is filled by H795. Substrate is bound by residues R796, H829, and S876. The propeptide at 994 to 1016 is linker; it reads SAAAFVGASVAPAKKENVVARQA. N1127 contributes to the substrate binding site. The active-site Proton acceptor is the K1182. K1184 is a binding site for substrate. Mg(2+)-binding residues include K1207, D1209, and E1210. K1207 bears the N6-carboxylysine mark. H1303 (proton acceptor) is an active-site residue. Residues R1304, H1337, and S1384 each contribute to the substrate site.

This sequence belongs to the RuBisCO large chain family. Type II subfamily. As to quaternary structure, homodimer. Mg(2+) serves as cofactor.

It is found in the plastid. It localises to the chloroplast. It catalyses the reaction 2 (2R)-3-phosphoglycerate + 2 H(+) = D-ribulose 1,5-bisphosphate + CO2 + H2O. The catalysed reaction is D-ribulose 1,5-bisphosphate + O2 = 2-phosphoglycolate + (2R)-3-phosphoglycerate + 2 H(+). In terms of biological role, ruBisCO catalyzes two reactions: the carboxylation of D-ribulose 1,5-bisphosphate, the primary event in carbon dioxide fixation, as well as the oxidative fragmentation of the pentose substrate. Both reactions occur simultaneously and in competition at the same active site. The sequence is that of Ribulose bisphosphate carboxylase (rbcL) from Symbiodinium sp. (Dinoflagellate).